A 273-amino-acid chain; its full sequence is Hemin import ATP-binding protein HmuV (273 aa).

The ABC transporter domain occupies 2–256; sequence LTAHHLDVAR…AHIAQCYGFA (255 aa). Residue 34-41 participates in ATP binding; it reads GRNGAGKS.

This sequence belongs to the ABC transporter superfamily. Heme (hemin) importer (TC 3.A.1.14.5) family. The complex is composed of two ATP-binding proteins (HmuV), two transmembrane proteins (HmuU) and a solute-binding protein (HmuT).

Its subcellular location is the cell inner membrane. In terms of biological role, part of the ABC transporter complex HmuTUV involved in hemin import. Responsible for energy coupling to the transport system. This is Hemin import ATP-binding protein HmuV from Burkholderia ambifaria (strain ATCC BAA-244 / DSM 16087 / CCUG 44356 / LMG 19182 / AMMD) (Burkholderia cepacia (strain AMMD)).